A 452-amino-acid polypeptide reads, in one-letter code: NADH-cytochrome b5 reductase-like protein alnC (452 aa).

Positions 4–80 (PASITLAEVA…LKTLLVGSLQ (77 aa)) constitute a Cytochrome b5 heme-binding domain. An FMN-binding site is contributed by 33–38 (AEYRED). Residues His39 and His63 each coordinate heme. FMN-binding positions include 80–83 (QSKT) and 116–125 (NDTSKYGQLP). Helical transmembrane passes span 120-140 (KYGQLPSLVLAGGLALLFFTL) and 166-186 (VGFLGGFLTATTLNTAAATFV). The region spanning 225-324 (NTQQFLTLVD…RGPFGRYSPS (100 aa)) is the FAD-binding FR-type domain. Residue 302-305 (YLLN) coordinates FAD. NADP(+) contacts are provided by residues 389 to 390 (GQ) and 395 to 399 (WKGLR).

This sequence belongs to the flavoprotein pyridine nucleotide cytochrome reductase family. Requires FAD as cofactor. FMN serves as cofactor.

The protein localises to the membrane. It functions in the pathway polyketide biosynthesis. In terms of biological role, NADH-cytochrome b5 reductase-like protein; part of the gene cluster that mediates the biosynthesis of asperlin, a polyketide showing anti-inflammatory, antitumor and antibiotic activities. The first step of the asperlin biosynthesis is the production of the intermediate 2,4,6-octatrienoic acid by the highly redusing polyketide synthase alnA with cleavage of the PKS product by the esterase alnB. 2,4,6-octatrienoic acid is further converted to asperlin via several steps involving the remaining enzymes from the cluster. This is NADH-cytochrome b5 reductase-like protein alnC from Emericella nidulans (strain FGSC A4 / ATCC 38163 / CBS 112.46 / NRRL 194 / M139) (Aspergillus nidulans).